The primary structure comprises 443 residues: Mitochondrial enolase superfamily member 1 (443 aa).

Residues 24 to 26 and Y34 contribute to the substrate site; that span reads GSD. S148 is modified (phosphoserine). K220 provides a ligand contact to substrate. The active-site Proton donor/acceptor is K222. Position 250 (D250) interacts with Mg(2+). Residues N252, E276, E305, 355-357, and E386 each bind substrate; that span reads HAG. Mg(2+) contacts are provided by E276 and E305. Residue H355 is part of the active site.

Belongs to the mandelate racemase/muconate lactonizing enzyme family. ENOSF1 subfamily. Requires Mg(2+) as cofactor. In terms of processing, could be sumoylated.

Its subcellular location is the mitochondrion. It carries out the reaction L-fuconate = 2-dehydro-3-deoxy-L-fuconate + H2O. Functionally, plays a role in the catabolism of L-fucose, a sugar that is part of the carbohydrates that are attached to cellular glycoproteins. Catalyzes the dehydration of L-fuconate to 2-keto-3-deoxy-L-fuconate by the abstraction of the 2-proton to generate an enediolate intermediate that is stabilized by the magnesium ion. May down-regulate thymidylate synthase activity, possibly already at the RNA level, by promoting the degradation of TYMS mRNA via an antisense RNA-based mechanism. The sequence is that of Mitochondrial enolase superfamily member 1 (ENOSF1) from Pongo abelii (Sumatran orangutan).